The primary structure comprises 358 residues: Putative purine permease 12 (358 aa).

The next 10 membrane-spanning stretches (helical) occupy residues 29 to 49, 62 to 82, 100 to 120, 128 to 148, 153 to 173, 189 to 209, 235 to 255, 280 to 299, 300 to 316, and 320 to 340; these read WILVFISIFFLISAQAISVLL, WISTLVQTGGFPILYLPLSLL, LVWIYLSLGFAIGLDNFLYSV, STYSILCASQLAFNGVFYYYI, ITCLIFFSVLFLSISAVLVSL, LIGCFCAVFASLIYSLQLSLM, VASCVAVIGLFASGEWMLLSV, LGCVGAVSLIFLVSSLFSNL, ISTLSLIVTPLAAIAVF, and LTEVKMVAMPIAFTGFTFYIY.

It belongs to the purine permeases (TC 2.A.7.14) family.

It localises to the membrane. The sequence is that of Putative purine permease 12 (PUP12) from Arabidopsis thaliana (Mouse-ear cress).